The primary structure comprises 427 residues: 3-phosphoshikimate 1-carboxyvinyltransferase (427 aa).

3 residues coordinate 3-phosphoshikimate: lysine 22, serine 23, and arginine 27. Lysine 22 is a binding site for phosphoenolpyruvate. Positions 96 and 124 each coordinate phosphoenolpyruvate. 7 residues coordinate 3-phosphoshikimate: serine 169, serine 170, glutamine 171, serine 197, aspartate 313, asparagine 336, and lysine 340. A phosphoenolpyruvate-binding site is contributed by glutamine 171. Residue aspartate 313 is the Proton acceptor of the active site. 3 residues coordinate phosphoenolpyruvate: arginine 344, arginine 386, and lysine 411.

It belongs to the EPSP synthase family. In terms of assembly, monomer.

The protein localises to the cytoplasm. It carries out the reaction 3-phosphoshikimate + phosphoenolpyruvate = 5-O-(1-carboxyvinyl)-3-phosphoshikimate + phosphate. It functions in the pathway metabolic intermediate biosynthesis; chorismate biosynthesis; chorismate from D-erythrose 4-phosphate and phosphoenolpyruvate: step 6/7. Functionally, catalyzes the transfer of the enolpyruvyl moiety of phosphoenolpyruvate (PEP) to the 5-hydroxyl of shikimate-3-phosphate (S3P) to produce enolpyruvyl shikimate-3-phosphate and inorganic phosphate. This Salmonella typhi protein is 3-phosphoshikimate 1-carboxyvinyltransferase.